The sequence spans 469 residues: UDP-N-acetylmuramate--L-alanine ligase (469 aa).

113-119 (GTHGKTT) serves as a coordination point for ATP.

This sequence belongs to the MurCDEF family.

The protein resides in the cytoplasm. It catalyses the reaction UDP-N-acetyl-alpha-D-muramate + L-alanine + ATP = UDP-N-acetyl-alpha-D-muramoyl-L-alanine + ADP + phosphate + H(+). Its pathway is cell wall biogenesis; peptidoglycan biosynthesis. In terms of biological role, cell wall formation. This Neisseria meningitidis serogroup A / serotype 4A (strain DSM 15465 / Z2491) protein is UDP-N-acetylmuramate--L-alanine ligase.